The primary structure comprises 277 residues: 3-methyl-2-oxobutanoate hydroxymethyltransferase (277 aa).

Mg(2+) is bound by residues Asp-54 and Asp-93. 3-methyl-2-oxobutanoate is bound by residues 54-55, Asp-93, and Lys-122; that span reads DS. Glu-124 provides a ligand contact to Mg(2+). The active-site Proton acceptor is Glu-191.

Belongs to the PanB family. Homodecamer; pentamer of dimers. Requires Mg(2+) as cofactor.

The protein resides in the cytoplasm. The enzyme catalyses 3-methyl-2-oxobutanoate + (6R)-5,10-methylene-5,6,7,8-tetrahydrofolate + H2O = 2-dehydropantoate + (6S)-5,6,7,8-tetrahydrofolate. It functions in the pathway cofactor biosynthesis; (R)-pantothenate biosynthesis; (R)-pantoate from 3-methyl-2-oxobutanoate: step 1/2. Its function is as follows. Catalyzes the reversible reaction in which hydroxymethyl group from 5,10-methylenetetrahydrofolate is transferred onto alpha-ketoisovalerate to form ketopantoate. The sequence is that of 3-methyl-2-oxobutanoate hydroxymethyltransferase from Alkalilimnicola ehrlichii (strain ATCC BAA-1101 / DSM 17681 / MLHE-1).